We begin with the raw amino-acid sequence, 180 residues long: Translation initiation factor IF-3 (180 aa).

Belongs to the IF-3 family. In terms of assembly, monomer.

Its subcellular location is the cytoplasm. In terms of biological role, IF-3 binds to the 30S ribosomal subunit and shifts the equilibrium between 70S ribosomes and their 50S and 30S subunits in favor of the free subunits, thus enhancing the availability of 30S subunits on which protein synthesis initiation begins. The protein is Translation initiation factor IF-3 of Escherichia coli (strain K12 / MC4100 / BW2952).